Here is a 117-residue protein sequence, read N- to C-terminus: Large ribosomal subunit protein bL20 (117 aa).

Belongs to the bacterial ribosomal protein bL20 family.

Its function is as follows. Binds directly to 23S ribosomal RNA and is necessary for the in vitro assembly process of the 50S ribosomal subunit. It is not involved in the protein synthesizing functions of that subunit. In Glaesserella parasuis serovar 5 (strain SH0165) (Haemophilus parasuis), this protein is Large ribosomal subunit protein bL20.